The primary structure comprises 131 residues: Peptide methionine sulfoxide reductase MsrB (131 aa).

The MsrB domain maps to 8–130; that stretch reads LDEWRSMLDP…NSVCIDLRPR (123 aa). Positions 47, 50, 96, and 99 each coordinate Zn(2+). Cysteine 119 functions as the Nucleophile in the catalytic mechanism.

The protein belongs to the MsrB Met sulfoxide reductase family. Requires Zn(2+) as cofactor.

The catalysed reaction is L-methionyl-[protein] + [thioredoxin]-disulfide + H2O = L-methionyl-(R)-S-oxide-[protein] + [thioredoxin]-dithiol. This Pseudomonas putida (strain ATCC 700007 / DSM 6899 / JCM 31910 / BCRC 17059 / LMG 24140 / F1) protein is Peptide methionine sulfoxide reductase MsrB.